The sequence spans 290 residues: Short neuropeptide F (290 aa).

The N-terminal stretch at 1 to 32 (MFRFNPQLSHGCALALICCLLNLLMMHQPTNA) is a signal peptide. Positions 33 to 87 (ELSPVVQGEFFLPILPDDHPPNTDTSFGGPISNLYDNLLQREYAGPVVFPNHQVE) are excised as a propeptide. 2 positions are modified to phenylalanine amide: Phe-100 and Phe-134. A propeptide spanning residues 138 to 290 (DPTLPQMRRT…IETSSIAPKN (153 aa)) is cleaved from the precursor. Residues 238–290 (VAGYANDGDDTEAQLDEDTSEFQREARKPMRLRWGRSTGKAPQIETSSIAPKN) form a disordered region. Residues 244 to 257 (DGDDTEAQLDEDTS) show a composition bias toward acidic residues. Over residues 281–290 (IETSSIAPKN) the composition is skewed to polar residues.

It belongs to the NPY family.

The protein localises to the secreted. Functionally, plays a role in controlling food intake and regulating body size. The protein is Short neuropeptide F of Drosophila pseudoobscura pseudoobscura (Fruit fly).